Consider the following 424-residue polypeptide: N-succinylarginine dihydrolase (424 aa).

Residues 19 to 28 (AGLSPGNIAS), Asn110, and 137 to 138 (HR) each bind substrate. Residue Glu174 is part of the active site. Arg207 lines the substrate pocket. His240 is a catalytic residue. 2 residues coordinate substrate: Asp242 and Asn349. The Nucleophile role is filled by Cys355.

The protein belongs to the succinylarginine dihydrolase family. As to quaternary structure, homodimer.

The enzyme catalyses N(2)-succinyl-L-arginine + 2 H2O + 2 H(+) = N(2)-succinyl-L-ornithine + 2 NH4(+) + CO2. It participates in amino-acid degradation; L-arginine degradation via AST pathway; L-glutamate and succinate from L-arginine: step 2/5. Catalyzes the hydrolysis of N(2)-succinylarginine into N(2)-succinylornithine, ammonia and CO(2). The sequence is that of N-succinylarginine dihydrolase from Rhizorhabdus wittichii (strain DSM 6014 / CCUG 31198 / JCM 15750 / NBRC 105917 / EY 4224 / RW1) (Sphingomonas wittichii).